Here is a 302-residue protein sequence, read N- to C-terminus: tRNA-cytidine(32) 2-sulfurtransferase (302 aa).

A PP-loop motif motif is present at residues 45–50 (SGGKDS). [4Fe-4S] cluster is bound by residues Cys120, Cys123, and Cys211.

The protein belongs to the TtcA family. In terms of assembly, homodimer. The cofactor is Mg(2+). Requires [4Fe-4S] cluster as cofactor.

The protein resides in the cytoplasm. It carries out the reaction cytidine(32) in tRNA + S-sulfanyl-L-cysteinyl-[cysteine desulfurase] + AH2 + ATP = 2-thiocytidine(32) in tRNA + L-cysteinyl-[cysteine desulfurase] + A + AMP + diphosphate + H(+). Its pathway is tRNA modification. Catalyzes the ATP-dependent 2-thiolation of cytidine in position 32 of tRNA, to form 2-thiocytidine (s(2)C32). The sulfur atoms are provided by the cysteine/cysteine desulfurase (IscS) system. This is tRNA-cytidine(32) 2-sulfurtransferase from Aeromonas salmonicida (strain A449).